A 533-amino-acid chain; its full sequence is Neuropilin and tolloid-like protein 1 (533 aa).

The N-terminal stretch at 1–22 is a signal peptide; the sequence is MIYGRSLFHIIASLIILHSSGA. Over 23 to 344 the chain is Extracellular; that stretch reads TKKGTEKQIT…LDQLTNTSGT (322 aa). 7 cysteine pairs are disulfide-bonded: Cys41–Cys68, Cys96–Cys118, Cys172–Cys202, Cys229–Cys251, Cys292–Cys304, Cys299–Cys317, and Cys311–Cys326. CUB domains lie at 41–155 and 172–287; these read CGTW…YNFT and CEFE…FTSF. In terms of domain architecture, LDL-receptor class A spans 291 to 327; it reads PCEGNTFFCHSNMCINNTLVCNGLQNCVYPWDENHCK. Residue Asn306 is glycosylated (N-linked (GlcNAc...) asparagine). An N-linked (GlcNAc...) asparagine glycan is attached at Asn340. A helical membrane pass occupies residues 345–365; sequence VIGVTSCIVIILIIVSVIVQI. The Cytoplasmic segment spans residues 366 to 533; that stretch reads KQPRKKYVQR…HESEYNTTRV (168 aa). Tyr417 carries the post-translational modification Phosphotyrosine. A PDZ-binding motif is present at residues 531–533; it reads TRV.

Interacts with PLZ domains of DLG2, DLG3 and DLG4 via its C-terminal TRV domain. Interacts with GRIN2A and GRIN2B via its CUB domains. In terms of tissue distribution, expressed only in brain. Present throughout the central nervous system. Highly expressed in the hippocampal CA3 region, olfactory bulb and tubercle, caudate putamen, and neocortex in the adult brain.

It localises to the membrane. It is found in the postsynaptic density membrane. Its function is as follows. Involved in the development and/or maintenance of neuronal circuitry. Accessory subunit of the neuronal N-methyl-D-aspartate receptor (NMDAR) critical for maintaining the abundance of GRIN2A-containing NMDARs in the postsynaptic density. Regulates long-term NMDA receptor-dependent synaptic plasticity and cognition, at least in the context of spatial learning and memory. This Mus musculus (Mouse) protein is Neuropilin and tolloid-like protein 1 (Neto1).